A 159-amino-acid chain; its full sequence is Small ribosomal subunit protein uS15 (159 aa).

Residues 1–16 (MNKRKEKGKSHSKRPV) show a composition bias toward basic residues. Positions 1–22 (MNKRKEKGKSHSKRPVRNTPPR) are disordered.

It belongs to the universal ribosomal protein uS15 family. As to quaternary structure, part of the 30S ribosomal subunit.

The protein is Small ribosomal subunit protein uS15 of Ignicoccus hospitalis (strain KIN4/I / DSM 18386 / JCM 14125).